Reading from the N-terminus, the 473-residue chain is UTP--glucose-1-phosphate uridylyltransferase (473 aa).

UTP-binding positions include 89 to 92, lysine 103, glutamine 166, and glycine 195; that span reads LNGG. Position 91 to 92 (91 to 92) interacts with substrate; that stretch reads GG. Substrate contacts are provided by residues histidine 196 and 224–226; that span reads NSD. UTP contacts are provided by aspartate 226 and lysine 364.

Belongs to the UDPGP type 1 family.

Its subcellular location is the cytoplasm. It carries out the reaction alpha-D-glucose 1-phosphate + UTP + H(+) = UDP-alpha-D-glucose + diphosphate. In terms of biological role, plays a central role as a glucosyl donor in cellular metabolic pathways. In Hordeum vulgare (Barley), this protein is UTP--glucose-1-phosphate uridylyltransferase.